Here is a 1387-residue protein sequence, read N- to C-terminus: DNA-directed RNA polymerase subunit beta'' (1387 aa).

4 residues coordinate Zn(2+): Cys-224, Cys-295, Cys-302, and Cys-305.

Belongs to the RNA polymerase beta' chain family. RpoC2 subfamily. In terms of assembly, in plastids the minimal PEP RNA polymerase catalytic core is composed of four subunits: alpha, beta, beta', and beta''. When a (nuclear-encoded) sigma factor is associated with the core the holoenzyme is formed, which can initiate transcription. It depends on Zn(2+) as a cofactor.

Its subcellular location is the plastid. The protein localises to the chloroplast. The enzyme catalyses RNA(n) + a ribonucleoside 5'-triphosphate = RNA(n+1) + diphosphate. In terms of biological role, DNA-dependent RNA polymerase catalyzes the transcription of DNA into RNA using the four ribonucleoside triphosphates as substrates. The sequence is that of DNA-directed RNA polymerase subunit beta'' from Panax ginseng (Korean ginseng).